We begin with the raw amino-acid sequence, 382 residues long: Chaperone protein DnaJ (382 aa).

One can recognise a J domain in the interval 5-70; sequence DYYEVLGLQK…QKRAAYDQYG (66 aa). Residues 134–212 form a CR-type zinc finger; it reads GTTKDIQINT…CHGEGRVHKK (79 aa). 8 residues coordinate Zn(2+): Cys-147, Cys-150, Cys-164, Cys-167, Cys-186, Cys-189, Cys-200, and Cys-203. 4 CXXCXGXG motif repeats span residues 147 to 154, 164 to 171, 186 to 193, and 200 to 207; these read CDSCGGSG, CPHCHGSG, CPTCHGSG, and CRNCHGEG.

It belongs to the DnaJ family. In terms of assembly, homodimer. The cofactor is Zn(2+).

Its subcellular location is the cytoplasm. Functionally, participates actively in the response to hyperosmotic and heat shock by preventing the aggregation of stress-denatured proteins and by disaggregating proteins, also in an autonomous, DnaK-independent fashion. Unfolded proteins bind initially to DnaJ; upon interaction with the DnaJ-bound protein, DnaK hydrolyzes its bound ATP, resulting in the formation of a stable complex. GrpE releases ADP from DnaK; ATP binding to DnaK triggers the release of the substrate protein, thus completing the reaction cycle. Several rounds of ATP-dependent interactions between DnaJ, DnaK and GrpE are required for fully efficient folding. Also involved, together with DnaK and GrpE, in the DNA replication of plasmids through activation of initiation proteins. The polypeptide is Chaperone protein DnaJ (Haemophilus influenzae (strain ATCC 51907 / DSM 11121 / KW20 / Rd)).